Reading from the N-terminus, the 1293-residue chain is Period circadian protein homolog 1 (1293 aa).

Positions 1-134 (MSGPLEGADG…SSEQSARART (134 aa)) are disordered. An interaction with BTRC region spans residues 1–151 (MSGPLEGADG…LRELKLRLPP (151 aa)). Low complexity-rich tracts occupy residues 48–57 (NSNGSSGNES) and 64–115 (GASQ…ASSE). The span at 116–132 (QDNPSTSGCSSEQSARA) shows a compositional bias: polar residues. Thr121 is modified (phosphothreonine; by CSNK1E). Residues Ser122 and Ser126 each carry the phosphoserine; by CSNK1E modification. Positions 138-147 (LMTALRELKL) match the Nuclear export signal 1 motif. 2 PAS domains span residues 208-275 (ITSE…PSRL) and 348-414 (YEAP…KILQ). The PAC domain occupies 422–465 (HSPIRFCARNGEYVTMDTSWAGFVHPWSRKVAFVLGRHKVRTAP). A Nuclear export signal 2 motif is present at residues 489-498 (LSEQIHRLLL). Disordered regions lie at residues 509 to 544 (LCGV…PAPV) and 647 to 697 (TKRK…KEPV). Low complexity-rich tracts occupy residues 513–533 (GPLM…SNGG) and 652–661 (ASSSCTASSA). Residues 596–814 (ELEVAPAPDQ…GLDTSSVAPS (219 aa)) are required for phosphorylation by CSNK1E. 3 positions are modified to phosphoserine: Ser660, Ser662, and Ser703. Disordered stretches follow at residues 748–771 (GLAP…APDA), 808–870 (TSSV…PPAT), 935–1094 (SQAP…SKYF), and 1204–1293 (SVQD…NGTS). Residues 750–768 (APGPAPSPAPSPTVAPDPA) are compositionally biased toward pro residues. Ser814 carries the phosphoserine modification. Positions 823–839 (IPSGRRHHCRSKAKRSR) match the Nuclear localization signal motif. A compositionally biased stretch (basic residues) spans 826-843 (GRRHHCRSKAKRSRHHQT). Pro residues-rich tracts occupy residues 856–870 (SPVP…PPAT) and 952–962 (PSLPPPPPSPP). A compositionally biased stretch (polar residues) spans 969–982 (LFNSRCSSPLQLNL). A phosphoserine mark is found at Ser975 and Ser976. Residues 978–985 (LQLNLLQL) carry the Nuclear export signal 3 motif. Residues 1032-1058 (LSGSSDLLELLLQEDSRSGTGSAASGS) are compositionally biased toward low complexity. Residues 1039–1043 (LELLL) carry the LXXLL motif. Over residues 1059–1073 (LGSGLGSGSGSGSHE) the composition is skewed to gly residues. Residues 1074–1091 (GGSTSASITRSSQSSHTS) are compositionally biased toward low complexity. The interval 1145–1293 (SRDAASVLKQ…ALPAEENGTS (149 aa)) is CRY binding domain. Positions 1232–1250 (GEGGGVGGGGGGVGGGGGD) are enriched in gly residues. Residues 1255–1269 (AQTQIGTKGSSSQDS) show a composition bias toward polar residues.

Homodimer. Component of the circadian core oscillator, which includes the CRY proteins, CLOCK or NPAS2, BMAL1 or BMAL2, CSNK1D and/or CSNK1E, TIMELESS, and the PER proteins. Interacts directly with TIMELESS, PER2, PER3, CRY1 and CRY2. Interacts with BMAL1 and CLOCK. Interacts with GPRASP1. Interacts (phosphorylated) with BTRC and FBXW11; the interactions trigger proteasomal degradation. Interacts with NONO and WDR5. Interacts with SFPQ. Interacts with USP2. Interacts with HNF4A. In terms of processing, phosphorylated on serine residues by CSNK1D, CSNK1E and probably also by CSNK1G2. Phosphorylation by CSNK1D or CSNK1E promotes nuclear location of PER proteins as well as ubiquitination and subsequent degradation. May be dephosphorylated by PP1. Post-translationally, ubiquitinated; requires phosphorylation by CSNK1E and interaction with BTRC and FBXW11. Deubiquitinated by USP2. Expressed in pancreas. In the CNS, highly expressed in the SCN, internal granular layer of granular cells of the olfactory bulb, tuberculum olfactorium, piriform cortex, gyrus dentatus of the hippocampus, cerebellum, pars tuberalis/median eminence, and pituitary, and moderately in the tenia tecta, caudate putamen, accumbens nucleus, spinal cord, superior and inferior colliculus and pineal gland.

It is found in the nucleus. The protein resides in the cytoplasm. Transcriptional repressor which forms a core component of the circadian clock. The circadian clock, an internal time-keeping system, regulates various physiological processes through the generation of approximately 24 hour circadian rhythms in gene expression, which are translated into rhythms in metabolism and behavior. It is derived from the Latin roots 'circa' (about) and 'diem' (day) and acts as an important regulator of a wide array of physiological functions including metabolism, sleep, body temperature, blood pressure, endocrine, immune, cardiovascular, and renal function. Consists of two major components: the central clock, residing in the suprachiasmatic nucleus (SCN) of the brain, and the peripheral clocks that are present in nearly every tissue and organ system. Both the central and peripheral clocks can be reset by environmental cues, also known as Zeitgebers (German for 'timegivers'). The predominant Zeitgeber for the central clock is light, which is sensed by retina and signals directly to the SCN. The central clock entrains the peripheral clocks through neuronal and hormonal signals, body temperature and feeding-related cues, aligning all clocks with the external light/dark cycle. Circadian rhythms allow an organism to achieve temporal homeostasis with its environment at the molecular level by regulating gene expression to create a peak of protein expression once every 24 hours to control when a particular physiological process is most active with respect to the solar day. Transcription and translation of core clock components (CLOCK, NPAS2, BMAL1, BMAL2, PER1, PER2, PER3, CRY1 and CRY2) plays a critical role in rhythm generation, whereas delays imposed by post-translational modifications (PTMs) are important for determining the period (tau) of the rhythms (tau refers to the period of a rhythm and is the length, in time, of one complete cycle). A diurnal rhythm is synchronized with the day/night cycle, while the ultradian and infradian rhythms have a period shorter and longer than 24 hours, respectively. Disruptions in the circadian rhythms contribute to the pathology of cardiovascular diseases, cancer, metabolic syndromes and aging. A transcription/translation feedback loop (TTFL) forms the core of the molecular circadian clock mechanism. Transcription factors, CLOCK or NPAS2 and BMAL1 or BMAL2, form the positive limb of the feedback loop, act in the form of a heterodimer and activate the transcription of core clock genes and clock-controlled genes (involved in key metabolic processes), harboring E-box elements (5'-CACGTG-3') within their promoters. The core clock genes: PER1/2/3 and CRY1/2 which are transcriptional repressors form the negative limb of the feedback loop and interact with the CLOCK|NPAS2-BMAL1|BMAL2 heterodimer inhibiting its activity and thereby negatively regulating their own expression. This heterodimer also activates nuclear receptors NR1D1/2 and RORA/B/G, which form a second feedback loop and which activate and repress BMAL1 transcription, respectively. Regulates circadian target genes expression at post-transcriptional levels, but may not be required for the repression at transcriptional level. Controls PER2 protein decay. Represses CRY2 preventing its repression on CLOCK/BMAL1 target genes such as FXYD5 and SCNN1A in kidney and PPARA in liver. Besides its involvement in the maintenance of the circadian clock, has an important function in the regulation of several processes. Participates in the repression of glucocorticoid receptor NR3C1/GR-induced transcriptional activity by reducing the association of NR3C1/GR to glucocorticoid response elements (GREs) by BMAL1:CLOCK. Plays a role in the modulation of the neuroinflammatory state via the regulation of inflammatory mediators release, such as CCL2 and IL6. In spinal astrocytes, negatively regulates the MAPK14/p38 and MAPK8/JNK MAPK cascades as well as the subsequent activation of NFkappaB. Coordinately regulates the expression of multiple genes that are involved in the regulation of renal sodium reabsorption. Can act as gene expression activator in a gene and tissue specific manner, in kidney enhances WNK1 and SLC12A3 expression in collaboration with CLOCK. Modulates hair follicle cycling. Represses the CLOCK-BMAL1 induced transcription of BHLHE40/DEC1. This is Period circadian protein homolog 1 from Rattus norvegicus (Rat).